A 464-amino-acid chain; its full sequence is MAITSAGAGSGIDLESVISASVSAKKAQLQQPIITKQNSTQITLSGIGQLKSSISAFTDILDKLSAPGAFNKRAINITQSKDDPILKVEGKSGASNGQYNIIVNKLAETSRQEGIFDSSTTPLATQDGQLTFKAGDKTFKVDVKAGDTLQDIRKSINSNGDNFGLSVNIVNTADGKAKLVIDSGISGDGKDLTITGDNAELGVFEAGGGVMSQTRAASSAEINVDGNVLKSDTNTFDDSIQDLKVTVLRVSDKDSAGDLKANKVDITTDKTSIQELVQQFVDGYNTLQDKMNSLGKRNTFVGGVKQDDGGALAGDSTTRAIESFMSNLLVSPSQNSGTYSTVFEIGIKMDNKGKLSLDKTKFGEAVDKNFDQVVALFGGEKGLASTLNSGLKEYTKSGGMLAQREDVLNSDLRALTQKTATANAQLTKYEAALRAQYGSLDALLVKMNSSASALATLQTSYQKS.

A coiled-coil region spans residues 403–436; that stretch reads QREDVLNSDLRALTQKTATANAQLTKYEAALRAQ.

This sequence belongs to the FliD family. Homopentamer.

The protein localises to the secreted. The protein resides in the bacterial flagellum. Functionally, required for the morphogenesis and for the elongation of the flagellar filament by facilitating polymerization of the flagellin monomers at the tip of growing filament. Forms a capping structure, which prevents flagellin subunits (transported through the central channel of the flagellum) from leaking out without polymerization at the distal end. The protein is Flagellar hook-associated protein 2 (fliD) of Aeromonas caviae (Aeromonas punctata).